The following is a 494-amino-acid chain: Argininosuccinate synthase, chloroplastic (494 aa).

The N-terminal 73 residues, 1-73 (MAEISATSFP…SRSCKNQAIR (73 aa)), are a transit peptide targeting the chloroplast. Ala74 carries the N-acetylalanine modification. ATP-binding positions include 102 to 110 (AYSGGLDTS) and Ala129. L-citrulline-binding residues include Tyr181 and Ser186. An ATP-binding site is contributed by Gly211. Positions 213, 217, and 218 each coordinate L-aspartate. Asn217 provides a ligand contact to L-citrulline. L-citrulline is bound by residues Arg221, Ser270, Ser279, Glu355, and Tyr367.

Belongs to the argininosuccinate synthase family. Type 1 subfamily. In terms of assembly, homotetramer.

It is found in the plastid. The protein localises to the chloroplast. The enzyme catalyses L-citrulline + L-aspartate + ATP = 2-(N(omega)-L-arginino)succinate + AMP + diphosphate + H(+). The protein operates within amino-acid biosynthesis; L-arginine biosynthesis; L-arginine from L-ornithine and carbamoyl phosphate: step 2/3. This chain is Argininosuccinate synthase, chloroplastic, found in Arabidopsis thaliana (Mouse-ear cress).